A 298-amino-acid chain; its full sequence is Cyclin-dependent kinase 2 homolog (298 aa).

The 281-residue stretch at 4–284 folds into the Protein kinase domain; that stretch reads YHKMEKIGEG…AKEALKHDYF (281 aa). ATP-binding positions include 10–18 and lysine 32; that span reads IGEGTYGVV. At threonine 14 the chain carries Phosphothreonine. Tyrosine 15 bears the Phosphotyrosine mark. The active-site Proton acceptor is the aspartate 125. At threonine 158 the chain carries Phosphothreonine.

This sequence belongs to the protein kinase superfamily. CMGC Ser/Thr protein kinase family. CDC2/CDKX subfamily. May form a complex composed of at least the catalytic subunit CRK2 and a cyclin. Mg(2+) is required as a cofactor.

It localises to the cytoplasm. It catalyses the reaction L-seryl-[protein] + ATP = O-phospho-L-seryl-[protein] + ADP + H(+). It carries out the reaction L-threonyl-[protein] + ATP = O-phospho-L-threonyl-[protein] + ADP + H(+). The enzyme catalyses [DNA-directed RNA polymerase] + ATP = phospho-[DNA-directed RNA polymerase] + ADP + H(+). Its activity is regulated as follows. Phosphorylation at Thr-14 or Tyr-15 inactivates the enzyme, while phosphorylation at Thr-158 activates it. In terms of biological role, serine/threonine-protein kinase. Involved in the control of the cell cycle. Required for entry into S-phase and mitosis. Probable component of the kinase complex that phosphorylates the repetitive C-terminus of RNA polymerase II. The sequence is that of Cyclin-dependent kinase 2 homolog from Theileria parva (East coast fever infection agent).